Here is a 662-residue protein sequence, read N- to C-terminus: MNFPWDQLLVKGNWMITMAQIGAPFLVIGLIAVITYFKLWKYLYKEWFTSVDHKKIGVMYLICAVLMFVRGGIDALLIRAQLTVPDNKFLESNHYNEIFSTHGVIMIIFMAMPFIFGLWNIVVPLQIGARDVAFPVLNNVSFWLFFAGMILFNLSFIIGGSPAAGWTNYAPLAGEFSPGPGVNYYLIAIQISGLGTLATGINFFVTILRCKTPTMKFMQMPMFTVTTFITTLIVILAFPPLTVALALMTTDRIFDTAFFTVAHGGMPMLWANFFWVWGHPEVYIVILPAFGIYSEIIPTFARKRLFGHQSMVWATAGIAFLSFLVWVHHFFTMGNGALINSFFSISTMLIGIPTGVKLFNWLLTLYKGRITFESPMLFSLAFIPNFLLGGVTGVMLAMASADYQYHNTYFLVAHFHYTLVTGVVFACLAGLIFWYPKMMGYKLNETLNKWCFWFFMIGFNVCFLPQFILGLDGMPRRLYTYMPSDGWFLLNLISTIGALLMAIGFLFLVVSIVYSHFKSPREATGDNWDGLGRTLEWTTASAIPPKYNFAITPDWNDYDTFVDMKEHGRHYLDNHNYKDIHMPNNTPVGFWIGIFMTIGGFFLIFETVIPALICLFGIFGTMIYRSFQIDHGYHIPAAEVAETEARLREARIKEREAVSHES.

The next 2 membrane-spanning stretches (helical) occupy residues 14–34 (WMIT…IAVI) and 58–78 (VMYL…ALLI). His102 lines the Fe(II)-heme a pocket. 8 consecutive transmembrane segments (helical) span residues 103 to 123 (GVIM…NIVV), 140 to 160 (VSFW…IIGG), 187 to 207 (IAIQ…FVTI), 228 to 248 (FITT…LALM), 273 to 293 (FFWV…FGIY), 311 to 331 (MVWA…HHFF), 336 to 356 (GALI…PTGV), and 376 to 396 (MLFS…GVML). His279, Tyr283, His328, and His329 together coordinate Cu cation. A cross-link (1'-histidyl-3'-tyrosine (His-Tyr)) is located at residues 279-283 (HPEVY). His414 contacts heme a3. 5 helical membrane-spanning segments follow: residues 415-435 (FHYT…IFWY), 451-471 (CFWF…ILGL), 493-513 (ISTI…VSIV), 587-604 (PVGF…FFLI), and 608-627 (VIPA…YRSF). His416 contributes to the Fe(II)-heme a binding site.

Belongs to the heme-copper respiratory oxidase family. Cu cation is required as a cofactor. The cofactor is ferriheme a. Requires Heme A3. as cofactor.

The protein localises to the cell membrane. The enzyme catalyses 2 a quinol + O2 = 2 a quinone + 2 H2O. It participates in energy metabolism; oxidative phosphorylation. Functionally, catalyzes quinol oxidation with the concomitant reduction of oxygen to water. The chain is Probable quinol oxidase subunit 1 (qoxB) from Staphylococcus aureus (strain COL).